Consider the following 543-residue polypeptide: Tubby-related protein 1 (543 aa).

A disordered region spans residues 1 to 290 (MPLQEETLRE…RASSPPVEVG (290 aa)). 2 stretches are compositionally biased toward basic and acidic residues: residues 46-56 (PETPDSLESKP) and 86-99 (FLRDPEAKKRDPRE). 2 stretches are compositionally biased toward acidic residues: residues 110-132 (GGEENSEEDSDDDDNDDDEEEEE) and 244-255 (KKEEEEEVEEEV). Residues 267-276 (GRAKGKGKKK) show a composition bias toward basic residues.

This sequence belongs to the TUB family. As to quaternary structure, homodimer. May interact with ABCF1, PSIP1, ZEB1 and HMGB2 (Potential). Interacts with F-actin. Interacts with DNM1. Interacts with TUB. Interacts with TYRO3. As to expression, retina specific. Detected in the outer plexiform layer in photoreceptor cells (at protein level).

Its subcellular location is the cytoplasm. The protein resides in the cell membrane. It localises to the secreted. The protein localises to the synapse. Functionally, required for normal development of photoreceptor synapses. Required for normal photoreceptor function and for long-term survival of photoreceptor cells. Interacts with cytoskeleton proteins and may play a role in protein transport in photoreceptor cells. Binds lipids, especially phosphatidylinositol 3-phosphate, phosphatidylinositol 4-phosphate, phosphatidylinositol 5-phosphate, phosphatidylinositol 3,4-bisphosphate, phosphatidylinositol 4,5-bisphosphate, phosphatidylinositol 3,4,5-bisphosphate, phosphatidylserine and phosphatidic acid (in vitro). Contribute to stimulation of phagocytosis of apoptotic retinal pigment epithelium (RPE) cells and macrophages. This Mus musculus (Mouse) protein is Tubby-related protein 1 (Tulp1).